A 133-amino-acid polypeptide reads, in one-letter code: Small ribosomal subunit protein uS8 (133 aa).

Belongs to the universal ribosomal protein uS8 family. In terms of assembly, part of the 30S ribosomal subunit. Contacts proteins S5 and S12.

Its function is as follows. One of the primary rRNA binding proteins, it binds directly to 16S rRNA central domain where it helps coordinate assembly of the platform of the 30S subunit. The sequence is that of Small ribosomal subunit protein uS8 from Oenococcus oeni (strain ATCC BAA-331 / PSU-1).